Here is a 435-residue protein sequence, read N- to C-terminus: Cytochrome c biogenesis protein Ccs1 (435 aa).

Transmembrane regions (helical) follow at residues 17–37, 77–97, and 163–183; these read LSLS…GTII, NPCF…CTFS, and IAPI…LISL.

Belongs to the Ccs1/CcsB family. In terms of assembly, may interact with CcsA.

Its subcellular location is the plastid. The protein localises to the chloroplast thylakoid membrane. In terms of biological role, required during biogenesis of c-type cytochromes (cytochrome c6 and cytochrome f) at the step of heme attachment. This Gracilaria tenuistipitata var. liui (Red alga) protein is Cytochrome c biogenesis protein Ccs1.